A 251-amino-acid chain; its full sequence is Large ribosomal subunit protein uL16m (251 aa).

Residues 1 to 29 (MWRLLTRVPAPLLRMHFSDSWAALPTSAG) constitute a mitochondrion transit peptide.

Belongs to the universal ribosomal protein uL16 family. Component of the mitochondrial ribosome large subunit (39S) which comprises a 16S rRNA and about 50 distinct proteins.

It localises to the mitochondrion. This Mus musculus (Mouse) protein is Large ribosomal subunit protein uL16m (Mrpl16).